The chain runs to 101 residues: Antiviral protein CAP (101 aa).

Functionally, has antiviral activity against tobacco mosaic virus and antitumor activity. The chain is Antiviral protein CAP from Coprinus comatus (Shaggy mane).